Reading from the N-terminus, the 423-residue chain is UPF0229 protein PSPTO_0546 (423 aa).

The tract at residues 65–110 (HHGRGGKQTVVHPGNKEFTTGEHIARPQGGAGGKGPGKAGNSGEGM) is disordered. Positions 93-107 (GGAGGKGPGKAGNSG) are enriched in gly residues.

It belongs to the UPF0229 family.

This is UPF0229 protein PSPTO_0546 from Pseudomonas syringae pv. tomato (strain ATCC BAA-871 / DC3000).